Here is a 229-residue protein sequence, read N- to C-terminus: 2-C-methyl-D-erythritol 4-phosphate cytidylyltransferase (229 aa).

It belongs to the IspD/TarI cytidylyltransferase family. IspD subfamily.

It carries out the reaction 2-C-methyl-D-erythritol 4-phosphate + CTP + H(+) = 4-CDP-2-C-methyl-D-erythritol + diphosphate. Its pathway is isoprenoid biosynthesis; isopentenyl diphosphate biosynthesis via DXP pathway; isopentenyl diphosphate from 1-deoxy-D-xylulose 5-phosphate: step 2/6. Its function is as follows. Catalyzes the formation of 4-diphosphocytidyl-2-C-methyl-D-erythritol from CTP and 2-C-methyl-D-erythritol 4-phosphate (MEP). This Clostridium botulinum (strain ATCC 19397 / Type A) protein is 2-C-methyl-D-erythritol 4-phosphate cytidylyltransferase.